Here is a 353-residue protein sequence, read N- to C-terminus: G-protein complex alpha subunit gpaA (353 aa).

The segment at 1–25 (MGCGMSTEDKEGKARNEEIENQLKR) is disordered. The segment covering 7–25 (TEDKEGKARNEEIENQLKR) has biased composition (basic and acidic residues). Residues 32–353 (NEIKMLLLGA…QENLRLCGLI (322 aa)) form the G-alpha domain. The segment at 35–48 (KMLLLGAGESGKST) is G1 motif. 2 residues coordinate a divalent metal cation: S47 and T181. The segment at 173-181 (DVLRSRVKT) is G2 motif. A G3 motif region spans residues 196–205 (YRMFDVGGQR). Residues 265–272 (ILFLNKID) form a G4 motif region. The interval 323 to 328 (TCATDT) is G5 motif.

The protein belongs to the G-alpha family. G(q) subfamily. In terms of assembly, g proteins are composed of 3 units; alpha, beta and gamma. The alpha chain contains the guanine nucleotide binding site. Interacts with gprM.

Functionally, G-protein complex alpha subunit that plays a role in conidiation and regulation of the biosynthesis of secondary metabolites such as dihydroxynaphthalene (DHN)-melanin, via interaction with the G protein-coupled receptor gprM. The protein is G-protein complex alpha subunit gpaA of Aspergillus fumigatus (strain CBS 144.89 / FGSC A1163 / CEA10) (Neosartorya fumigata).